We begin with the raw amino-acid sequence, 400 residues long: Subtilisin-like protease 7 (400 aa).

The signal sequence occupies residues 1–20 (MGFITKAIPLALAAASVING). A propeptide spanning residues 21–119 (AEIMETRAGV…IERDARVQIN (99 aa)) is cleaved from the precursor. Residues 36–118 (KYIVVMNDGM…YIERDARVQI (83 aa)) form the Inhibitor I9 domain. Asn-58 is a glycosylation site (N-linked (GlcNAc...) asparagine). The Peptidase S8 domain maps to 129–400 (SWGLARVGSK…SKLINNGSGM (272 aa)). Residues Asp-161 and His-192 each act as charge relay system in the active site. Residues Asn-222 and Asn-252 are each glycosylated (N-linked (GlcNAc...) asparagine). Residue Ser-346 is the Charge relay system of the active site. Residue Asn-396 is glycosylated (N-linked (GlcNAc...) asparagine).

This sequence belongs to the peptidase S8 family.

It is found in the secreted. Its function is as follows. Secreted subtilisin-like serine protease with keratinolytic activity that contributes to pathogenicity. The polypeptide is Subtilisin-like protease 7 (SUB7) (Trichophyton verrucosum (Cattle ringworm fungus)).